We begin with the raw amino-acid sequence, 216 residues long: Phosphoenolpyruvate guanylyltransferase (216 aa).

Phosphoenolpyruvate is bound by residues Thr150, Gly165, and Ser168.

The protein belongs to the CofC family.

It catalyses the reaction phosphoenolpyruvate + GTP + H(+) = enolpyruvoyl-2-diphospho-5'-guanosine + diphosphate. Its pathway is cofactor biosynthesis; coenzyme F420 biosynthesis. Guanylyltransferase that catalyzes the activation of phosphoenolpyruvate (PEP) as enolpyruvoyl-2-diphospho-5'-guanosine, via the condensation of PEP with GTP. It is involved in the biosynthesis of coenzyme F420, a hydride carrier cofactor. This Mycobacterium leprae (strain Br4923) protein is Phosphoenolpyruvate guanylyltransferase.